Reading from the N-terminus, the 421-residue chain is Serine hydroxymethyltransferase (421 aa).

(6S)-5,6,7,8-tetrahydrofolate-binding positions include L118 and 122–124 (GHL). An N6-(pyridoxal phosphate)lysine modification is found at K226. (6S)-5,6,7,8-tetrahydrofolate is bound at residue E242.

This sequence belongs to the SHMT family. Homodimer. Requires pyridoxal 5'-phosphate as cofactor.

It localises to the cytoplasm. It carries out the reaction (6R)-5,10-methylene-5,6,7,8-tetrahydrofolate + glycine + H2O = (6S)-5,6,7,8-tetrahydrofolate + L-serine. Its pathway is one-carbon metabolism; tetrahydrofolate interconversion. It participates in amino-acid biosynthesis; glycine biosynthesis; glycine from L-serine: step 1/1. Catalyzes the reversible interconversion of serine and glycine with tetrahydrofolate (THF) serving as the one-carbon carrier. This reaction serves as the major source of one-carbon groups required for the biosynthesis of purines, thymidylate, methionine, and other important biomolecules. Also exhibits THF-independent aldolase activity toward beta-hydroxyamino acids, producing glycine and aldehydes, via a retro-aldol mechanism. This Mycoplasmopsis synoviae (strain 53) (Mycoplasma synoviae) protein is Serine hydroxymethyltransferase.